The following is a 597-amino-acid chain: Arginine--tRNA ligase (597 aa).

A 'HIGH' region motif is present at residues 124–134 (PNVAKPLHVGH).

This sequence belongs to the class-I aminoacyl-tRNA synthetase family. As to quaternary structure, monomer.

Its subcellular location is the cytoplasm. The enzyme catalyses tRNA(Arg) + L-arginine + ATP = L-arginyl-tRNA(Arg) + AMP + diphosphate. The protein is Arginine--tRNA ligase of Agathobacter rectalis (strain ATCC 33656 / DSM 3377 / JCM 17463 / KCTC 5835 / VPI 0990) (Eubacterium rectale).